The following is a 298-amino-acid chain: Deoxyuridine 5'-triphosphate nucleotidohydrolase (298 aa).

A substrate-binding site is contributed by 180 to 182 (RSG).

It belongs to the dUTPase family. Mg(2+) is required as a cofactor.

The enzyme catalyses dUTP + H2O = dUMP + diphosphate + H(+). In terms of biological role, involved in nucleotide metabolism: produces dUMP, the immediate precursor of thymidine nucleotides and decreases the intracellular concentration of dUTP to avoid uracil incorporation into viral DNA. This chain is Deoxyuridine 5'-triphosphate nucleotidohydrolase, found in Alcelaphine herpesvirus 1 (strain C500) (AlHV-1).